A 375-amino-acid polypeptide reads, in one-letter code: MTQPAILVLEDGTVFEGESVGANGLSVGEVVFNTAMTGYQEVLTDPSYARQMVTLTYPHIGNTGFNDQDDEAKQVWAAGLIVRDVPRRPSSWRNQVALPAWLQTRGVVAISGIDTRKLTRLLREKGAQNGALMAGEIDVEKALEAARKFPGLKGMDLAKVVSTETTYQWQEGQLDLNANAFVQAELKFKVVAYDYGVKINILRMLAERGCDVTVVPARTPVAEVLAMQPDGVFLSNGPGDPEPCDYAISAIQELIAKKVPTFGICLGHQLLALAAGAKTVKMATGHHGANHPVQDLDGGRVMITSQNHGFAVDETTLPANVRVTHRSLFDGTNQGIALTDAPAFSFQGHPEASPGPRDVGPLFDRFVASMAEAKS.

The segment at 1–185 (MTQPAILVLE…LNANAFVQAE (185 aa)) is CPSase. Residues Ser47, Gly237, and Gly239 each coordinate L-glutamine. Residues 189–375 (KVVAYDYGVK…FVASMAEAKS (187 aa)) form the Glutamine amidotransferase type-1 domain. The active-site Nucleophile is Cys265. L-glutamine contacts are provided by Leu266, Gln269, Asn307, Gly309, and Phe310. Catalysis depends on residues His349 and Glu351.

It belongs to the CarA family. In terms of assembly, composed of two chains; the small (or glutamine) chain promotes the hydrolysis of glutamine to ammonia, which is used by the large (or ammonia) chain to synthesize carbamoyl phosphate. Tetramer of heterodimers (alpha,beta)4.

It carries out the reaction hydrogencarbonate + L-glutamine + 2 ATP + H2O = carbamoyl phosphate + L-glutamate + 2 ADP + phosphate + 2 H(+). The catalysed reaction is L-glutamine + H2O = L-glutamate + NH4(+). The protein operates within amino-acid biosynthesis; L-arginine biosynthesis; carbamoyl phosphate from bicarbonate: step 1/1. It participates in pyrimidine metabolism; UMP biosynthesis via de novo pathway; (S)-dihydroorotate from bicarbonate: step 1/3. Functionally, small subunit of the glutamine-dependent carbamoyl phosphate synthetase (CPSase). CPSase catalyzes the formation of carbamoyl phosphate from the ammonia moiety of glutamine, carbonate, and phosphate donated by ATP, constituting the first step of 2 biosynthetic pathways, one leading to arginine and/or urea and the other to pyrimidine nucleotides. The small subunit (glutamine amidotransferase) binds and cleaves glutamine to supply the large subunit with the substrate ammonia. The sequence is that of Carbamoyl phosphate synthase small chain from Xanthomonas campestris pv. campestris (strain ATCC 33913 / DSM 3586 / NCPPB 528 / LMG 568 / P 25).